Here is a 221-residue protein sequence, read N- to C-terminus: Type II secretion system protein J (221 aa).

The propeptide at 1-15 (MWRTNQVSSRQNMAG) is leader sequence. N-methylphenylalanine is present on phenylalanine 16. Residues 16 to 36 (FTLIEVLVAIAIFASLSVGAY) form a helical membrane-spanning segment.

It belongs to the GSP J family. In terms of assembly, type II secretion is composed of four main components: the outer membrane complex, the inner membrane complex, the cytoplasmic secretion ATPase and the periplasm-spanning pseudopilus. Interacts with core component epsG. Post-translationally, cleaved by prepilin peptidase. In terms of processing, methylated by prepilin peptidase at the amino group of the N-terminal phenylalanine once the leader sequence is cleaved by prepilin peptidase.

It is found in the cell inner membrane. Its function is as follows. Component of the type II secretion system required for the energy-dependent secretion of extracellular factors such as proteases and toxins from the periplasm. Part of the pseudopilus tip complex that is critical for the recognition and binding of secretion substrates. In Vibrio cholerae serotype O1 (strain ATCC 39315 / El Tor Inaba N16961), this protein is Type II secretion system protein J (epsJ).